Reading from the N-terminus, the 418-residue chain is Inner capsid protein sigma-2 (418 aa).

It belongs to the orthoreovirus sigma-1 protein family. In terms of assembly, interacts with protein mu-NS; in viral inclusions.

The protein localises to the virion. In terms of biological role, inner capsid (core) component. The protein is Inner capsid protein sigma-2 (S2) of Reovirus type 3 (strain Dearing) (T3D).